The chain runs to 366 residues: Protein BIG GRAIN 1-like B (366 aa).

2 disordered regions span residues 42–73 (DSST…DFNR) and 129–148 (FERS…EHGS). Residues 56–73 (QNREDTRVSANRRDDFNR) are compositionally biased toward basic and acidic residues.

It belongs to the BIG GRAIN 1 (BG1) plant protein family.

Its subcellular location is the cell membrane. In terms of biological role, involved in auxin transport. Regulator of the auxin signaling pathway. The sequence is that of Protein BIG GRAIN 1-like B from Arabidopsis thaliana (Mouse-ear cress).